Consider the following 274-residue polypeptide: Lectizyme (274 aa).

Positions 1–16 (MKFFAVFALCVASVSA) are cleaved as a signal peptide. In terms of domain architecture, Peptidase S1 spans 32-268 (IINGHEAEKG…FDKWIEDSIE (237 aa)). Cysteine 57 and cysteine 73 are disulfide-bonded. Active-site charge relay system residues include histidine 72 and aspartate 119. Disulfide bonds link cysteine 188–cysteine 204 and cysteine 215–cysteine 244. The Charge relay system role is filled by serine 219.

It belongs to the peptidase S1 family. Expressed in the midgut.

The protein resides in the secreted. Protein with lectin and protease activity involved in the establishment of trypanosome infections in tsetse flies. Binds D-glucosamine and agglutinates bloodstream-form trypanosomes and rabbit red blood cells. Capable of inducing transformation of bloodstream-form trypanosomes into procyclic (midgut) forms in vitro. The protein is Lectizyme (Gpl) of Glossina austeni (Savannah tsetse fly).